Consider the following 100-residue polypeptide: Urease subunit gamma (100 aa).

The protein belongs to the urease gamma subunit family. Heterotrimer of UreA (gamma), UreB (beta) and UreC (alpha) subunits. Three heterotrimers associate to form the active enzyme.

The protein localises to the cytoplasm. The enzyme catalyses urea + 2 H2O + H(+) = hydrogencarbonate + 2 NH4(+). It functions in the pathway nitrogen metabolism; urea degradation; CO(2) and NH(3) from urea (urease route): step 1/1. Ureolysis may allow urea to be employed as a nitrogen source for growth and produces ammonia which may protect from killing at low pH. The chain is Urease subunit gamma from Streptococcus salivarius (strain 57.I).